A 122-amino-acid polypeptide reads, in one-letter code: Small ribosomal subunit protein uS13 (122 aa).

The span at Gly95–Thr116 shows a compositional bias: basic residues. The disordered stretch occupies residues Gly95–Lys122.

The protein belongs to the universal ribosomal protein uS13 family. As to quaternary structure, part of the 30S ribosomal subunit. Forms a loose heterodimer with protein S19. Forms two bridges to the 50S subunit in the 70S ribosome.

In terms of biological role, located at the top of the head of the 30S subunit, it contacts several helices of the 16S rRNA. In the 70S ribosome it contacts the 23S rRNA (bridge B1a) and protein L5 of the 50S subunit (bridge B1b), connecting the 2 subunits; these bridges are implicated in subunit movement. Contacts the tRNAs in the A and P-sites. This is Small ribosomal subunit protein uS13 from Aliarcobacter butzleri (strain RM4018) (Arcobacter butzleri).